Consider the following 346-residue polypeptide: D-fructose 1,6-bisphosphatase class 2/sedoheptulose 1,7-bisphosphatase (346 aa).

Residues aspartate 33, glutamate 57, aspartate 97, and glutamate 100 each coordinate Mn(2+). Substrate-binding positions include 100 to 102, tyrosine 131, 176 to 178, and 198 to 200; these read EGT, RDR, and DGD. Residue glutamate 225 coordinates Mn(2+).

This sequence belongs to the FBPase class 2 family. As to quaternary structure, homotetramer. Mn(2+) serves as cofactor.

It catalyses the reaction beta-D-fructose 1,6-bisphosphate + H2O = beta-D-fructose 6-phosphate + phosphate. The catalysed reaction is D-sedoheptulose 1,7-bisphosphate + H2O = D-sedoheptulose 7-phosphate + phosphate. The protein operates within carbohydrate biosynthesis; Calvin cycle. Its function is as follows. Catalyzes the hydrolysis of fructose 1,6-bisphosphate (Fru 1,6-P2) and sedoheptulose 1,7-bisphosphate (Sed 1,7-P2) to fructose 6-phosphate and sedoheptulose 7-phosphate, respectively. This chain is D-fructose 1,6-bisphosphatase class 2/sedoheptulose 1,7-bisphosphatase, found in Gloeobacter violaceus (strain ATCC 29082 / PCC 7421).